Reading from the N-terminus, the 100-residue chain is Small ribosomal subunit protein uS14c (100 aa).

Belongs to the universal ribosomal protein uS14 family. In terms of assembly, part of the 30S ribosomal subunit.

It localises to the plastid. It is found in the chloroplast. In terms of biological role, binds 16S rRNA, required for the assembly of 30S particles. In Guillardia theta (Cryptophyte), this protein is Small ribosomal subunit protein uS14c.